The following is a 322-amino-acid chain: Phosphatidylserine decarboxylase proenzyme (322 aa).

Catalysis depends on charge relay system; for autoendoproteolytic cleavage activity residues D90, H147, and S254. S254 serves as the catalytic Schiff-base intermediate with substrate; via pyruvic acid; for decarboxylase activity. S254 carries the pyruvic acid (Ser); by autocatalysis modification. Positions 294–322 (EVEPVPLPEEEIKAEHDASPLVDDKKDET) are disordered. Over residues 303 to 322 (EEIKAEHDASPLVDDKKDET) the composition is skewed to basic and acidic residues.

The protein belongs to the phosphatidylserine decarboxylase family. PSD-B subfamily. Prokaryotic type I sub-subfamily. As to quaternary structure, heterodimer of a large membrane-associated beta subunit and a small pyruvoyl-containing alpha subunit. Requires pyruvate as cofactor. Post-translationally, is synthesized initially as an inactive proenzyme. Formation of the active enzyme involves a self-maturation process in which the active site pyruvoyl group is generated from an internal serine residue via an autocatalytic post-translational modification. Two non-identical subunits are generated from the proenzyme in this reaction, and the pyruvate is formed at the N-terminus of the alpha chain, which is derived from the carboxyl end of the proenzyme. The autoendoproteolytic cleavage occurs by a canonical serine protease mechanism, in which the side chain hydroxyl group of the serine supplies its oxygen atom to form the C-terminus of the beta chain, while the remainder of the serine residue undergoes an oxidative deamination to produce ammonia and the pyruvoyl prosthetic group on the alpha chain. During this reaction, the Ser that is part of the protease active site of the proenzyme becomes the pyruvoyl prosthetic group, which constitutes an essential element of the active site of the mature decarboxylase.

The protein resides in the cell membrane. It catalyses the reaction a 1,2-diacyl-sn-glycero-3-phospho-L-serine + H(+) = a 1,2-diacyl-sn-glycero-3-phosphoethanolamine + CO2. It functions in the pathway phospholipid metabolism; phosphatidylethanolamine biosynthesis; phosphatidylethanolamine from CDP-diacylglycerol: step 2/2. Its function is as follows. Catalyzes the formation of phosphatidylethanolamine (PtdEtn) from phosphatidylserine (PtdSer). The chain is Phosphatidylserine decarboxylase proenzyme from Salmonella arizonae (strain ATCC BAA-731 / CDC346-86 / RSK2980).